The following is a 186-amino-acid chain: Elongation factor P (186 aa).

It belongs to the elongation factor P family.

The protein resides in the cytoplasm. It functions in the pathway protein biosynthesis; polypeptide chain elongation. Involved in peptide bond synthesis. Stimulates efficient translation and peptide-bond synthesis on native or reconstituted 70S ribosomes in vitro. Probably functions indirectly by altering the affinity of the ribosome for aminoacyl-tRNA, thus increasing their reactivity as acceptors for peptidyl transferase. This Streptococcus thermophilus (strain CNRZ 1066) protein is Elongation factor P.